The chain runs to 318 residues: GTP cyclohydrolase MptA (318 aa).

This sequence belongs to the GTP cyclohydrolase IV family. As to quaternary structure, homodimer. It depends on Fe(2+) as a cofactor.

The catalysed reaction is GTP + H2O = 7,8-dihydroneopterin 2',3'-cyclic phosphate + formate + diphosphate + H(+). Its pathway is cofactor biosynthesis; 5,6,7,8-tetrahydromethanopterin biosynthesis. Functionally, converts GTP to 7,8-dihydro-D-neopterin 2',3'-cyclic phosphate, the first intermediate in the biosynthesis of coenzyme methanopterin. The sequence is that of GTP cyclohydrolase MptA from Methanosarcina mazei (strain ATCC BAA-159 / DSM 3647 / Goe1 / Go1 / JCM 11833 / OCM 88) (Methanosarcina frisia).